The primary structure comprises 427 residues: Enolase (427 aa).

Residue Q163 participates in (2R)-2-phosphoglycerate binding. Catalysis depends on E205, which acts as the Proton donor. Residues D242, E285, and D312 each coordinate Mg(2+). (2R)-2-phosphoglycerate is bound by residues K337, R366, S367, and K388. K337 functions as the Proton acceptor in the catalytic mechanism.

This sequence belongs to the enolase family. Requires Mg(2+) as cofactor.

The protein localises to the cytoplasm. Its subcellular location is the secreted. It is found in the cell surface. It carries out the reaction (2R)-2-phosphoglycerate = phosphoenolpyruvate + H2O. The protein operates within carbohydrate degradation; glycolysis; pyruvate from D-glyceraldehyde 3-phosphate: step 4/5. Functionally, catalyzes the reversible conversion of 2-phosphoglycerate (2-PG) into phosphoenolpyruvate (PEP). It is essential for the degradation of carbohydrates via glycolysis. This chain is Enolase, found in Bradyrhizobium sp. (strain ORS 278).